Consider the following 246-residue polypeptide: Ribonuclease PH (246 aa).

Phosphate contacts are provided by residues Arg-86 and 124–126 (GTR).

Belongs to the RNase PH family. In terms of assembly, homohexameric ring arranged as a trimer of dimers.

The enzyme catalyses tRNA(n+1) + phosphate = tRNA(n) + a ribonucleoside 5'-diphosphate. In terms of biological role, phosphorolytic 3'-5' exoribonuclease that plays an important role in tRNA 3'-end maturation. Removes nucleotide residues following the 3'-CCA terminus of tRNAs; can also add nucleotides to the ends of RNA molecules by using nucleoside diphosphates as substrates, but this may not be physiologically important. Probably plays a role in initiation of 16S rRNA degradation (leading to ribosome degradation) during starvation. This Bacillus licheniformis (strain ATCC 14580 / DSM 13 / JCM 2505 / CCUG 7422 / NBRC 12200 / NCIMB 9375 / NCTC 10341 / NRRL NRS-1264 / Gibson 46) protein is Ribonuclease PH.